We begin with the raw amino-acid sequence, 633 residues long: DNA topoisomerase 4 subunit B (633 aa).

ATP contacts are provided by residues Y5, N45, D72, 113 to 119, and K337; that span reads GLHGVGA. Residues 419–534 enclose the Toprim domain; that stretch reads KELFIVEGDS…LGHVYLALPP (116 aa). Residues E425, D499, and D501 each contribute to the Mg(2+) site.

It belongs to the type II topoisomerase family. ParE type 2 subfamily. In terms of assembly, heterotetramer composed of ParC and ParE. The cofactor is Mg(2+). Mn(2+) serves as cofactor. Requires Ca(2+) as cofactor.

The enzyme catalyses ATP-dependent breakage, passage and rejoining of double-stranded DNA.. Functionally, topoisomerase IV is essential for chromosome segregation. It relaxes supercoiled DNA. Performs the decatenation events required during the replication of a circular DNA molecule. In Mycoplasma genitalium (strain ATCC 33530 / DSM 19775 / NCTC 10195 / G37) (Mycoplasmoides genitalium), this protein is DNA topoisomerase 4 subunit B.